The sequence spans 792 residues: Kinesin-related protein 2 (792 aa).

2 disordered regions span residues 22 to 50 (TINSRPSLLRKPASSSSQSNDRISYPPST) and 162 to 183 (NNININSNNSSNSNNNILSPVQ). A compositionally biased stretch (polar residues) spans 34 to 50 (ASSSSQSNDRISYPPST). Residues 284 to 423 (RLSLSIQDIK…LEKSRSDEKV (140 aa)) are a coiled coil. The 345-residue stretch at 437-781 (NIRVFCRIRP…LRFAAKVNSC (345 aa)) folds into the Kinesin motor domain. ATP is bound at residue 528–535 (GQTGSGKT).

This sequence belongs to the TRAFAC class myosin-kinesin ATPase superfamily. Kinesin family. NCD subfamily.

The protein resides in the nucleus. It localises to the cytoplasm. It is found in the cytoskeleton. The protein localises to the spindle. In terms of biological role, microtubule-dependent motor that is probably involved in microtubule organization in the mitotic spindle. This Dictyostelium discoideum (Social amoeba) protein is Kinesin-related protein 2 (kif2).